The chain runs to 525 residues: GMP synthase [glutamine-hydrolyzing] (525 aa).

Residues 9–207 (RILILDFGSQ…VRDICQCEAL (199 aa)) form the Glutamine amidotransferase type-1 domain. Cysteine 86 serves as the catalytic Nucleophile. Residues histidine 181 and glutamate 183 contribute to the active site. The region spanning 208-400 (WTPAKIIDDA…LGLPYDMLYR (193 aa)) is the GMPS ATP-PPase domain. 235–241 (SGGVDSS) lines the ATP pocket.

In terms of assembly, homodimer.

The enzyme catalyses XMP + L-glutamine + ATP + H2O = GMP + L-glutamate + AMP + diphosphate + 2 H(+). The protein operates within purine metabolism; GMP biosynthesis; GMP from XMP (L-Gln route): step 1/1. In terms of biological role, catalyzes the synthesis of GMP from XMP. The sequence is that of GMP synthase [glutamine-hydrolyzing] from Shigella dysenteriae serotype 1 (strain Sd197).